A 581-amino-acid chain; its full sequence is Arginine--tRNA ligase (581 aa).

Positions 126–136 match the 'HIGH' region motif; that stretch reads PNLAKEMHVGH.

The protein belongs to the class-I aminoacyl-tRNA synthetase family. In terms of assembly, monomer.

It is found in the cytoplasm. The catalysed reaction is tRNA(Arg) + L-arginine + ATP = L-arginyl-tRNA(Arg) + AMP + diphosphate. The chain is Arginine--tRNA ligase from Shewanella putrefaciens (strain CN-32 / ATCC BAA-453).